The chain runs to 150 residues: MAQLLMVTVTLGCISLLYLLPGTLSGSLGKGLRHSRPREPPAKIPSSNLQPGHPSLQPVVWKSRRHAPQPQGRGNRALAMVHLPQGGGSRHPGPQRPTGSRRPHAQLLRVGCVLGTCQVQNLSHRLWQLVRPAGRRDSAPVDPSSPHSYG.

Residues 1-25 form the signal peptide; it reads MAQLLMVTVTLGCISLLYLLPGTLS. Residues 26–100 constitute a propeptide that is removed on maturation; it reads GSLGKGLRHS…HPGPQRPTGS (75 aa). The interval 28 to 102 is disordered; that stretch reads LGKGLRHSRP…GPQRPTGSRR (75 aa). C112 and C117 form a disulfide bridge. At Y149 the chain carries Tyrosine amide.

It belongs to the adrenomedullin family. High expression detected in the submaxillary gland, kidney, stomach, and mesentery, followed by the pituitary, lung, pancreas, intestines, spleen, thymus and ovary. Expressed mainly in the intermediate lobe of the pituitary, with sporadic in the anterior lobe.

The protein localises to the secreted. Its function is as follows. Intermedin/ADM2 is a peptide hormone that plays a role as physiological regulator of gastrointestinal and cardiovascular bioactivities mediated by the CALCRL-RAMPs receptor complexes. Activates the cAMP-dependent pathway through interaction with CALCRL-RAMP3 receptor complex. The sequence is that of Protein ADM2 from Mus musculus (Mouse).